The primary structure comprises 254 residues: Receptor expression-enhancing protein 2 (254 aa).

A run of 2 helical transmembrane segments spans residues 1 to 21 (MVSWIISRLVVLIFGTLYPAY) and 35 to 55 (YVKWMMYWIVFAFFTTAETLT). Ser152 carries the post-translational modification Phosphoserine. Residues 194–254 (LSLRSSTSQP…KKSSGGGDSA (61 aa)) are disordered. A compositionally biased stretch (basic and acidic residues) spans 205-219 (PRTETSEDDLGDKAP).

It belongs to the DP1 family. As to quaternary structure, interacts with odorant receptor proteins.

The protein resides in the membrane. Functionally, required for endoplasmic reticulum (ER) network formation, shaping and remodeling. May enhance the cell surface expression of odorant receptors. The polypeptide is Receptor expression-enhancing protein 2 (Reep2) (Mus musculus (Mouse)).